Reading from the N-terminus, the 319-residue chain is Translocon-associated protein subunit alpha (319 aa).

A signal peptide spans 1 to 21 (MRLLPRLLLLFLLAFPAAVLL). Residues 22–208 (RGGPGGSLAV…EREDGLDGET (187 aa)) lie on the Lumenal side of the membrane. Acidic residues predominate over residues 35–76 (LTEDEETVEDPIIEDEDDEAEVEEDEPTDLAEEKEEEEDVSS). Residues 35–84 (LTEDEETVEDPIIEDEDDEAEVEEDEPTDLAEEKEEEEDVSSEPEASPSA) form a disordered region. 2 N-linked (GlcNAc...) asparagine glycosylation sites follow: Asn137 and Asn192. A helical transmembrane segment spans residues 209 to 229 (IFMYMFLAGLGLLVVVGLHQL). The Cytoplasmic portion of the chain corresponds to 230–319 (LESRKRKRPI…SLRQLAVCGI (90 aa)). The residue at position 248 (Ser248) is a Phosphoserine. Thr261 bears the Phosphothreonine mark.

This sequence belongs to the TRAP-alpha family. Heterotetramer of TRAP-alpha, TRAP-beta, TRAP-delta and TRAP-gamma. Interacts with palmitoylated calnexin (CALX), the interaction is required for efficient folding of glycosylated proteins.

It localises to the endoplasmic reticulum membrane. In terms of biological role, TRAP proteins are part of a complex whose function is to bind calcium to the ER membrane and thereby regulate the retention of ER resident proteins. May be involved in the recycling of the translocation apparatus after completion of the translocation process or may function as a membrane-bound chaperone facilitating folding of translocated proteins. The protein is Translocon-associated protein subunit alpha (Ssr1) of Rattus norvegicus (Rat).